A 572-amino-acid chain; its full sequence is MRTSQYLLSTLKETPADAEVISHQLMLRAGMIRKLASGLYTWLPTGVRVLKKVENIVREEMNNAGAIEVSMPVVQPADLWQESGRWEQYGPELLRFVDRGERPFVLGPTHEEVITDLIRNELSSYKQLPLNFYQIQTKFRDEVRPRFGVMRSREFLMKDAYSFHTSQESLQETYDAMYAAYSKIFSRMGLDFRAVQADTGSIGGSASHEFQVLAQSGEDDVVFSDTSDYAANIELAEAIAPKEPRAAATQEMTLVDTPNAKTIAELVEQFNLPIEKTVKTLLVKAVEGSSFPQVALLVRGDHELNEVKAEKLPQVASPLTFATEEEIRAVVKAGPGSLGPVNMPIPVVIDRTVAAMSDFAAGANIDGKHYFGINWDRDVATPEVADIRNVVAGDPSPDGQGRLLIKRGIEVGHIFQLGTKYSEALKASVQGEDGRNQILTMGCYGIGVTRVVAAAIEQNYDERGIVWPDAIAPFQVAILPMNMHKSFRVQELAEKLYSELRAQGIEVLLDDRKERPGVMFADMELIGIPHTIVLGDRNLDNDDIEYKYRRNGEKQLIKTGDIVEYLVKQIKG.

The protein belongs to the class-II aminoacyl-tRNA synthetase family. ProS type 1 subfamily. Homodimer.

Its subcellular location is the cytoplasm. The enzyme catalyses tRNA(Pro) + L-proline + ATP = L-prolyl-tRNA(Pro) + AMP + diphosphate. Its function is as follows. Catalyzes the attachment of proline to tRNA(Pro) in a two-step reaction: proline is first activated by ATP to form Pro-AMP and then transferred to the acceptor end of tRNA(Pro). As ProRS can inadvertently accommodate and process non-cognate amino acids such as alanine and cysteine, to avoid such errors it has two additional distinct editing activities against alanine. One activity is designated as 'pretransfer' editing and involves the tRNA(Pro)-independent hydrolysis of activated Ala-AMP. The other activity is designated 'posttransfer' editing and involves deacylation of mischarged Ala-tRNA(Pro). The misacylated Cys-tRNA(Pro) is not edited by ProRS. In Escherichia coli (strain K12 / MC4100 / BW2952), this protein is Proline--tRNA ligase.